The following is a 583-amino-acid chain: MDRNSVTGLAIIAVIMIVWLQFMSPEKKPLLPSKTVKTETVVQSDVQVPAVSIPAADNFGVFASSSGGQEKLLKVENDLFRATLSSKGATLKSLVLKKHLDGNRLPFDLVSNGKNGALSLLFLTREGKKIDTRDLYFSNVTLDTLRTIKGKESYAVRYHLDVAPQQAIDIIFGFTGDSYKVDYDVKLTGFASELAGNEYQVQWDGGVPFSEKNRPDEAQSALASAYLGGSLVKLDASKEKQSYREEQSGEAQWVAVRNKYFVAALIPHGKSAGIYLDGKRETGNDFESYLAALKIAVPSTAGVVDDKFSLYLGPLDYNIVKAQKVGLEKIMDFGWDWLTRPFAEFIILPVFSWMNGFVSNYGLIIIIFAFLIKLVTYPLSMASTKSMKKMSALQPALKELQEKYKDNPAKLQSELGRIYKEAGVNPIGGCLPVVLQMPLLFAMFYVFRSSIELRQHSFLWAKDLSVPDSIFDFGFAIPMYGSHIAVFPILMAVTVYLQQKITPTTQSNEQMKVMMYMFPAMMLLFFNNMPAGLGLYYLMFNIFSVAQQFYINKTTTAADMPQVNLGLAPAGAQRKQKKGGAKK.

6 consecutive transmembrane segments (helical) span residues 5-25 (SVTGLAIIAVIMIVWLQFMSP), 341-361 (PFAEFIILPVFSWMNGFVSNY), 362-382 (GLIIIIFAFLIKLVTYPLSMA), 427-447 (IGGCLPVVLQMPLLFAMFYVF), 473-493 (FGFAIPMYGSHIAVFPILMAV), and 520-540 (AMMLLFFNNMPAGLGLYYLMF).

The protein belongs to the OXA1/ALB3/YidC family. Type 1 subfamily. In terms of assembly, interacts with the Sec translocase complex via SecD. Specifically interacts with transmembrane segments of nascent integral membrane proteins during membrane integration.

The protein resides in the cell inner membrane. Required for the insertion and/or proper folding and/or complex formation of integral membrane proteins into the membrane. Involved in integration of membrane proteins that insert both dependently and independently of the Sec translocase complex, as well as at least some lipoproteins. Aids folding of multispanning membrane proteins. The polypeptide is Membrane protein insertase YidC (Pelodictyon phaeoclathratiforme (strain DSM 5477 / BU-1)).